The following is a 296-amino-acid chain: Protease HtpX homolog (296 aa).

A run of 2 helical transmembrane segments spans residues 14–34 (VVLL…VGYL) and 39–59 (YQFG…SMIF). Histidine 143 contributes to the Zn(2+) binding site. The active site involves glutamate 144. Histidine 147 is a binding site for Zn(2+). A run of 2 helical transmembrane segments spans residues 158–178 (IAVA…RMLF) and 195–215 (ILVL…ASLV). Glutamate 224 is a binding site for Zn(2+).

It belongs to the peptidase M48B family. It depends on Zn(2+) as a cofactor.

Its subcellular location is the cell membrane. The protein is Protease HtpX homolog of Streptococcus agalactiae serotype Ia (strain ATCC 27591 / A909 / CDC SS700).